The primary structure comprises 326 residues: Probable cell division protein WhiA (326 aa).

Positions 275 to 308 form a DNA-binding region, H-T-H motif; the sequence is SLDELGHHADPPMTKDAVAGRIRRLLAMADKKAV.

This sequence belongs to the WhiA family.

Involved in cell division and chromosome segregation. The chain is Probable cell division protein WhiA from Clavibacter sepedonicus (Clavibacter michiganensis subsp. sepedonicus).